The sequence spans 382 residues: 3-ketosteroid-9-alpha-monooxygenase, oxygenase component (382 aa).

Residues 20-122 (WHCLGLSRTF…TMEKHGQLFV (103 aa)) enclose the Rieske domain. Cysteine 61, histidine 63, cysteine 80, and histidine 83 together coordinate [2Fe-2S] cluster. Asparagine 169, histidine 175, histidine 180, and aspartate 298 together coordinate Fe cation.

As to quaternary structure, homotrimer. The two-component system 3-ketosteroid-9-alpha-monooxygenase is composed of an oxygenase component KshA and a reductase component KshB. Requires [2Fe-2S] cluster as cofactor. The cofactor is Fe cation.

It carries out the reaction androsta-1,4-diene-3,17-dione + 2 reduced [2Fe-2S]-[ferredoxin] + O2 + 2 H(+) = 9alpha-hydroxyandrosta-1,4-diene-3,17-dione + 2 oxidized [2Fe-2S]-[ferredoxin] + H2O. Its function is as follows. In vitro, catalyzes the introduction of a 9alpha-hydroxyl moiety into the ring B of 3-ketosteroid substrates such as 1,4-androstadiene-3,17-dione (ADD), 4-androstene-3,17-dione (AD), 4-androstene-17beta-ol-3-one (testosterone), 4-pregnene-3,20-dione (progesterone), 23,24-bisnorcholesta-4-ene-22-oate and 23,24-bisnorcholesta-1,4-diene-22-oate. This Rhodococcus rhodochrous protein is 3-ketosteroid-9-alpha-monooxygenase, oxygenase component.